We begin with the raw amino-acid sequence, 418 residues long: Probable basic-leucine zipper transcription factor E (418 aa).

Positions 8 to 47 (IQQIQQLHMLLQQQQQQQQQQQQQQQQQQQQLQQQNFQLT) form a coiled coil. Composition is skewed to low complexity over residues 51 to 71 (FQIPVNNNNNNNNNSNNNNNN) and 95 to 134 (INTTTTTTNNNNNNNNNNNNNNNNNNNNNNNNNNNNNNNT). Disordered stretches follow at residues 51–75 (FQIPVNNNNNNNNNSNNNNNNETAF), 95–149 (INTT…KKQK), 165–196 (PTAAVKKKPPAKKSAKNAASQPTSPTLSTTNT), and 211–252 (KNQE…KNRR). Basic residues predominate over residues 169 to 179 (VKKKPPAKKSA). A compositionally biased stretch (low complexity) spans 180-196 (KNAASQPTSPTLSTTNT). A compositionally biased stretch (acidic residues) spans 220–239 (DNSEESDSDEEDFENGDNEN). In terms of domain architecture, bZIP spans 246 to 309 (GDRKNRRLLK…QLMKDKVRYL (64 aa)). Residues 248 to 268 (RKNRRLLKNREAAQLFRQRQK) form a basic motif region. The leucine-zipper stretch occupies residues 274-281 (LESKASSL). A coiled-coil region spans residues 324–362 (SVVNQDNINNLNNNLNGLQNQQNNNNNNNNNNNNNNNNN). The segment at 336 to 418 (NNLNGLQNQQ…DSLLFNLPPD (83 aa)) is disordered.

Belongs to the bZIP family.

Its subcellular location is the nucleus. Functionally, probable transcriptional regulator. The protein is Probable basic-leucine zipper transcription factor E (bzpE) of Dictyostelium discoideum (Social amoeba).